Here is a 160-residue protein sequence, read N- to C-terminus: MNDQIKIRKATKEDWEKIYQLYNSLSDEDLYLRFFHLYRITEEDAKKIASNEDHVTFLAEVDGKVVGEASLHKDGEFSLVVHRNYRTLGIGTLLVKTLIEEAKKSGLSTVKFYTLPENTPMIKIGRKLGFKMRFYEDEVYGEMRLTERELNVNLATFSAP.

The N-acetyltransferase domain occupies 5 to 148; the sequence is IKIRKATKED…VYGEMRLTER (144 aa). Residues Leu-79, Val-81, Thr-87, Gly-89, Gly-91, Thr-92, Asn-118, Lys-123, and Lys-127 each contribute to the CoA site.

The protein belongs to the acetyltransferase family. GNAT subfamily.

It catalyses the reaction L-lysyl-[protein] + acetyl-CoA = N(6)-acetyl-L-lysyl-[protein] + CoA + H(+). Functionally, modulates activity of albA1, the major archaeal DNA compaction protein, by decreasing albA1's nucleic acid binding affinity through acetylation of 'Lys-16'. The chain is N-acetyltransferase Pat from Saccharolobus solfataricus (strain ATCC 35092 / DSM 1617 / JCM 11322 / P2) (Sulfolobus solfataricus).